The sequence spans 77 residues: Acyl carrier protein (77 aa).

The region spanning 2–77 (SDIEQRVKNV…LAIDYVKSHQ (76 aa)) is the Carrier domain. O-(pantetheine 4'-phosphoryl)serine is present on Ser-37.

The protein belongs to the acyl carrier protein (ACP) family. Post-translationally, 4'-phosphopantetheine is transferred from CoA to a specific serine of apo-ACP by AcpS. This modification is essential for activity because fatty acids are bound in thioester linkage to the sulfhydryl of the prosthetic group.

The protein localises to the cytoplasm. Its pathway is lipid metabolism; fatty acid biosynthesis. Carrier of the growing fatty acid chain in fatty acid biosynthesis. The polypeptide is Acyl carrier protein (Leucothrix mucor).